We begin with the raw amino-acid sequence, 382 residues long: MAP kinase-activated protein kinase 3 (382 aa).

Methionine 1 is subject to N-acetylmethionine. Residues 1 to 34 (MDGETAEEQGGPVPPPVAPGGPGLGGAPGGRREP) form a disordered region. The segment covering 20–29 (GGPGLGGAPG) has biased composition (gly residues). In terms of domain architecture, Protein kinase spans 44–304 (QLSKQVLGLG…ITQFMNHPWI (261 aa)). ATP-binding positions include 50–58 (LGLGVNGKV) and lysine 73. Aspartate 166 acts as the Proton acceptor in catalysis. The residue at position 201 (threonine 201) is a Phosphothreonine; by MAPK14. Serine 251 bears the Phosphoserine; by MAPK14 mark. Serine 307 carries the post-translational modification Phosphoserine; by autocatalysis. The tract at residues 307–343 (SMVVPQTPLHTARVLQEDKDHWDEVKEEMTSALATMR) is autoinhibitory helix. Threonine 313 is modified (phosphothreonine; by MAPK14). The Nuclear export signal (NES) signature appears at 335-344 (MTSALATMRV). The interval 345-369 (DYDQVKIKDLKTSNNRLLNKRRKKQ) is p38 MAPK-binding site. 2 short sequence motifs (bipartite nuclear localization signal) span residues 350 to 353 (KIKD) and 364 to 368 (KRRKK). Residues 357 to 382 (SNNRLLNKRRKKQAGSSSASQGCNNQ) are disordered. Over residues 370–382 (AGSSSASQGCNNQ) the composition is skewed to polar residues.

It belongs to the protein kinase superfamily. CAMK Ser/Thr protein kinase family. As to quaternary structure, heterodimer with p38-alpha/MAPK14. The heterodimer with p38-alpha/MAPK14 forms a stable complex: molecules are positioned 'face to face' so that the ATP-binding sites of both kinases are at the heterodimer interface. Interacts with TCF3 and with polycomb proteins, such as PCH2 and BMI1/PCGF4. Post-translationally, phosphorylated and activated by MAPK1/ERK2 and MAPK3/ERK1. Phosphorylated and activated by MAP kinase p38-alpha/MAPK14 at Thr-201, Ser-251 and Thr-313. In terms of tissue distribution, widely expressed, with a higher expression level observed in heart and skeletal muscle. No expression in brain. Expressed in the retinal pigment epithelium.

The protein resides in the nucleus. It is found in the cytoplasm. The catalysed reaction is L-seryl-[protein] + ATP = O-phospho-L-seryl-[protein] + ADP + H(+). It carries out the reaction L-threonyl-[protein] + ATP = O-phospho-L-threonyl-[protein] + ADP + H(+). With respect to regulation, activated following phosphorylation by p38-alpha/MAPK14 following various stresses. Inhibited by ligand 5B (2'-[2-(1,3-benzodioxol-5-yl)pyrimidin-4-yl]-5',6'-dihydrospiro[piperidine-4,7'-pyrrolo[3,2-c]pyridin]- 4'(1'h)-one) and ligand P4O (2-[2-(2-fluorophenyl)pyridin-4-yl]-1,5,6,7-tetrahydro- 4h-pyrrolo[3,2-c]pyridin-4-one), 2 ATP-competitive inhibitors. Stress-activated serine/threonine-protein kinase involved in cytokines production, endocytosis, cell migration, chromatin remodeling and transcriptional regulation. Following stress, it is phosphorylated and activated by MAP kinase p38-alpha/MAPK14, leading to phosphorylation of substrates. Phosphorylates serine in the peptide sequence, Hyd-X-R-X(2)-S, where Hyd is a large hydrophobic residue. MAPKAPK2 and MAPKAPK3, share the same function and substrate specificity, but MAPKAPK3 kinase activity and level in protein expression are lower compared to MAPKAPK2. Phosphorylates HSP27/HSPB1, KRT18, KRT20, RCSD1, RPS6KA3, TAB3 and TTP/ZFP36. Mediates phosphorylation of HSP27/HSPB1 in response to stress, leading to dissociate HSP27/HSPB1 from large small heat-shock protein (sHsps) oligomers and impair their chaperone activities and ability to protect against oxidative stress effectively. Involved in inflammatory response by regulating tumor necrosis factor (TNF) and IL6 production post-transcriptionally: acts by phosphorylating AU-rich elements (AREs)-binding proteins, such as TTP/ZFP36, leading to regulate the stability and translation of TNF and IL6 mRNAs. Phosphorylation of TTP/ZFP36, a major post-transcriptional regulator of TNF, promotes its binding to 14-3-3 proteins and reduces its ARE mRNA affinity leading to inhibition of dependent degradation of ARE-containing transcript. Involved in toll-like receptor signaling pathway (TLR) in dendritic cells: required for acute TLR-induced macropinocytosis by phosphorylating and activating RPS6KA3. Also acts as a modulator of Polycomb-mediated repression. The sequence is that of MAP kinase-activated protein kinase 3 (MAPKAPK3) from Homo sapiens (Human).